A 353-amino-acid chain; its full sequence is uncharacterized protein (353 aa).

The N-terminal stretch at 1 to 30 is a signal peptide; the sequence is MHLRHLFSSRLRGSLLLGSLLVVSSFSTQA.

As to quaternary structure, monomer.

This is an uncharacterized protein from Escherichia coli (strain K12).